A 434-amino-acid polypeptide reads, in one-letter code: Chaperone SurA (434 aa).

The signal sequence occupies residues 1-29 (MKTLRLNFRSAILKALGALLLLQGCLAHA). 2 consecutive PpiC domains span residues 180 to 281 (AEEY…AMLE) and 290 to 389 (VEQS…QVQD).

The protein localises to the periplasm. The enzyme catalyses [protein]-peptidylproline (omega=180) = [protein]-peptidylproline (omega=0). Functionally, chaperone involved in the correct folding and assembly of outer membrane proteins. Recognizes specific patterns of aromatic residues and the orientation of their side chains, which are found more frequently in integral outer membrane proteins. May act in both early periplasmic and late outer membrane-associated steps of protein maturation. This Hahella chejuensis (strain KCTC 2396) protein is Chaperone SurA.